Reading from the N-terminus, the 498-residue chain is Cysteine--tRNA ligase (498 aa).

Cys44 is a Zn(2+) binding site. Positions 46-56 (PTVYSDAHLGH) match the 'HIGH' region motif. Zn(2+) contacts are provided by Cys235, His260, and Glu264. Positions 291 to 295 (KMSKS) match the 'KMSKS' region motif. Lys294 contributes to the ATP binding site.

It belongs to the class-I aminoacyl-tRNA synthetase family. As to quaternary structure, monomer. The cofactor is Zn(2+).

Its subcellular location is the cytoplasm. The catalysed reaction is tRNA(Cys) + L-cysteine + ATP = L-cysteinyl-tRNA(Cys) + AMP + diphosphate. This chain is Cysteine--tRNA ligase (cysS), found in Deinococcus radiodurans (strain ATCC 13939 / DSM 20539 / JCM 16871 / CCUG 27074 / LMG 4051 / NBRC 15346 / NCIMB 9279 / VKM B-1422 / R1).